The chain runs to 250 residues: Galectin-3 (250 aa).

A disordered region spans residues 1 to 60; sequence MADNFSLHDALSGSGNPNPQGWPGAWGNQPAGAGGYPGASYPGAYPGQAPPGAYPGQAPP. Ala2 carries the post-translational modification N-acetylalanine. A phosphoserine mark is found at Ser6 and Ser12. Repeat copies occupy residues 36–44, 45–53, and 54–62. Residues 36–109 form an 8 X 9 AA tandem repeats of Y-P-G-X(3)-P-G-A region; the sequence is YPGASYPGAY…AYPATGPYGA (74 aa). Over residues 38-47 the composition is skewed to low complexity; that stretch reads GASYPGAYPG. Residues 48–60 show a composition bias toward pro residues; the sequence is QAPPGAYPGQAPP. One copy of the 4; approximate repeat lies at 63–69; that stretch reads YPGAPGA. Copy 5 of the repeat occupies 70–78; the sequence is YPGAPAPGV. The stretch at 79 to 88 is one 6; approximate repeat; the sequence is YPGPPSGPGA. A 7; approximate repeat occupies 89–100; that stretch reads YPSSGQPSATGA. The stretch at 101-109 is one 8; approximate repeat; sequence YPATGPYGA. Residues 118 to 248 form the Galectin domain; sequence YNLPLPGGVV…DIDLTSASYT (131 aa). 181–187 is an a beta-D-galactoside binding site; the sequence is WGREERQ. Phosphoserine is present on Ser188. The Nuclear export signal signature appears at 226-241; sequence KKLNEISKLGISGDID.

In terms of assembly, probably forms homo- or heterodimers. Interacts with DMBT1. Interacts with CD6 and ALCAM. Forms a complex with the ITGA3, ITGB1 and CSPG4. Interacts with LGALS3BP, LYPD3, ZFTRAF1 and UACA. Interacts with TRIM16; this interaction mediates autophagy of damage endomembranes. Interacts with cargo receptor TMED10; the interaction mediates the translocation from the cytoplasm into the ERGIC (endoplasmic reticulum-Golgi intermediate compartment) and thereby secretion. In terms of tissue distribution, a major expression is found in the colonic epithelium. It is also abundant in the activated macrophages. Expressed in fetal membranes.

It is found in the cytoplasm. Its subcellular location is the nucleus. It localises to the secreted. Its function is as follows. Galactose-specific lectin which binds IgE. May mediate with the alpha-3, beta-1 integrin the stimulation by CSPG4 of endothelial cells migration. Together with DMBT1, required for terminal differentiation of columnar epithelial cells during early embryogenesis. In the nucleus: acts as a pre-mRNA splicing factor. Involved in acute inflammatory responses including neutrophil activation and adhesion, chemoattraction of monocytes macrophages, opsonization of apoptotic neutrophils, and activation of mast cells. Together with TRIM16, coordinates the recognition of membrane damage with mobilization of the core autophagy regulators ATG16L1 and BECN1 in response to damaged endomembranes. This chain is Galectin-3, found in Homo sapiens (Human).